We begin with the raw amino-acid sequence, 459 residues long: Eukaryotic translation initiation factor 3 subunit M (459 aa).

The 178-residue stretch at 207-384 folds into the PCI domain; sequence LDWAQTHVVD…SEFLVHRATY (178 aa). The interval 431-459 is disordered; that stretch reads AAAEGEKGDKNNKGPSERRRAPQEIAAAE. Residues 434–452 show a composition bias toward basic and acidic residues; it reads EGEKGDKNNKGPSERRRAP.

The protein belongs to the eIF-3 subunit M family. In terms of assembly, component of the eukaryotic translation initiation factor 3 (eIF-3) complex.

The protein resides in the cytoplasm. Its function is as follows. Component of the eukaryotic translation initiation factor 3 (eIF-3) complex, which is involved in protein synthesis of a specialized repertoire of mRNAs and, together with other initiation factors, stimulates binding of mRNA and methionyl-tRNAi to the 40S ribosome. The eIF-3 complex specifically targets and initiates translation of a subset of mRNAs involved in cell proliferation. This chain is Eukaryotic translation initiation factor 3 subunit M, found in Emericella nidulans (strain FGSC A4 / ATCC 38163 / CBS 112.46 / NRRL 194 / M139) (Aspergillus nidulans).